The chain runs to 285 residues: Golgi phosphoprotein 3-like (285 aa).

The tract at residues 1–42 (MTTLTHRARRTEISKNSEKKMESEEDSNWEKSPDNEDSGDSK) is disordered. Residues 10-42 (RTEISKNSEKKMESEEDSNWEKSPDNEDSGDSK) show a composition bias toward basic and acidic residues. The a 1,2-diacyl-sn-glycero-3-phospho-(1D-myo-inositol 4-phosphate) site is built by W67 and R76. A Phosphoserine modification is found at S112. Residues R157 and R160 each contribute to the a 1,2-diacyl-sn-glycero-3-phospho-(1D-myo-inositol 4-phosphate) site. The beta-hairpin required for oligomerization stretch occupies residues 176–187 (EKQNFLLFDMTT).

This sequence belongs to the GOLPH3/VPS74 family. Homooligomer. Does not interact MYO18; differs from GOLPH3 by its inability to interact with MYO18. May interact with ARF1.

Its subcellular location is the golgi apparatus. It localises to the golgi stack membrane. The protein resides in the trans-Golgi network membrane. Functionally, phosphatidylinositol-4-phosphate-binding protein that may antagonize the action of GOLPH3 which is required for the process of vesicle budding at the Golgi and anterograde transport to the plasma membrane. This is Golgi phosphoprotein 3-like (GOLPH3L) from Homo sapiens (Human).